We begin with the raw amino-acid sequence, 367 residues long: tRNA-specific 2-thiouridylase MnmA (367 aa).

ATP is bound by residues 13–20 (GLSGGVDS) and Met-39. Residues 99 to 101 (NPD) are interaction with target base in tRNA. The active-site Nucleophile is the Cys-104. A disulfide bond links Cys-104 and Cys-200. Gly-128 is a binding site for ATP. The segment at 150–152 (KDQ) is interaction with tRNA. Cys-200 functions as the Cysteine persulfide intermediate in the catalytic mechanism. An interaction with tRNA region spans residues 307–308 (RY).

This sequence belongs to the MnmA/TRMU family.

Its subcellular location is the cytoplasm. The catalysed reaction is S-sulfanyl-L-cysteinyl-[protein] + uridine(34) in tRNA + AH2 + ATP = 2-thiouridine(34) in tRNA + L-cysteinyl-[protein] + A + AMP + diphosphate + H(+). In terms of biological role, catalyzes the 2-thiolation of uridine at the wobble position (U34) of tRNA, leading to the formation of s(2)U34. This chain is tRNA-specific 2-thiouridylase MnmA, found in Neisseria meningitidis serogroup A / serotype 4A (strain DSM 15465 / Z2491).